The following is a 139-amino-acid chain: Non-structural protein 1 (139 aa).

A DLNP; interaction with MAP1B motif is present at residues 136-139; that stretch reads DLNP.

The protein belongs to the pneumovirus non-structural protein 1 family. Monomer. Homomultimer. Heteromultimer with NS2. Interacts with the matrix protein M. Interacts with host ELOC and CUL2; this interaction allows NS1 to form an active E3 ligase with ELOC and CUL2. Interacts with host IRF3; this interaction leads to the disrupted association of IRF3 with CREBBP and thus reduced binding of IRF3 to the IFN-beta promoter. Interacts with host MAVS; this interaction prevents MAVS binding to RIGI and inhibits signaling pathway leading to interferon production. Interacts with host MAP1B/microtubule-associated protein 1B. Interacts with host TRIM25 (via SPRY domain); this interaction suppresses RIGI ubiquitination and results in decreased interaction between RIGI and MAVS.

The protein resides in the host cytoplasm. It localises to the host mitochondrion. It is found in the host nucleus. Plays a major role in antagonizing the type I IFN-mediated antiviral response by degrading or inhibiting multiple cellular factors required for either IFN induction or response pathways. Acts cooperatively with NS2 to repress activation and nuclear translocation of host IFN-regulatory factor IRF3. Also disrupts the association of IRF3 with CREBBP. Interacts with host mitochondrial-associated membrane (MAM) MAVS and prevents the interaction with RIGI. Interacts with TRIM25 to suppress TRIM25-mediated RIGI ubiquitination and thereby RIGI-MAVS interaction. Together with NS2, participates in the proteasomal degradation of host STAT2, IRF3, IRF7, TBK1 and RIGI through a NS-degradasome involving CUL2 and Elongin-C. The degradasome requires an intact mitochondrial MAVS. Decreases the levels of host TRAF3 and IKBKE/IKK-epsilon. As functions other than disruptions of the type I IFN-mediated antiviral signaling pathways, induces host SOCS1 and SOCS3 expression. Suppresses premature apoptosis by an NF-kappa-B-dependent, interferon-independent mechanism and thus facilitates virus growth. Additionally, NS1 may serve some inhibitory role in viral transcription and RNA replication. Suppresses proliferation and activation of host CD103+ CD8+ cytotoxic T-lymphocytes and Th17 helper T-lymphocytes. The chain is Non-structural protein 1 (1C) from Homo sapiens (Human).